We begin with the raw amino-acid sequence, 180 residues long: Pro-glucagon (180 aa).

An N-terminal signal peptide occupies residues 1–20; it reads MKSVYFVAGLFIMLAQGSWQ. Residues 23–58 form a disordered region; sequence LQDTEEKPRSVSASQTDMLDDPDQMNEDKRHSQGTF. Position 54 is a phosphoserine (serine 54). The propeptide occupies 84-89; the sequence is NRNNIA. 2 positions are modified to phosphoserine: serine 105 and serine 108. An Arginine amide modification is found at arginine 127. Positions 131-145 are excised as a propeptide; the sequence is DFPEEVAIVEELGRR. Phosphoserine is present on residues serine 150 and serine 152.

Belongs to the glucagon family. Proglucagon is post-translationally processed in a tissue-specific manner in pancreatic A cells and intestinal L cells. In pancreatic A cells, the major bioactive hormone is glucagon cleaved by PCSK2/PC2. In the intestinal L cells PCSK1/PC1 liberates GLP-1, GLP-2, glicentin and oxyntomodulin. GLP-1 is further N-terminally truncated by post-translational processing in the intestinal L cells resulting in GLP-1(7-37) GLP-1-(7-36)amide. The C-terminal amidation is neither important for the metabolism of GLP-1 nor for its effects on the endocrine pancreas.

It is found in the secreted. In terms of biological role, plays a key role in glucose metabolism and homeostasis. Regulates blood glucose by increasing gluconeogenesis and decreasing glycolysis. A counterregulatory hormone of insulin, raises plasma glucose levels in response to insulin-induced hypoglycemia. Plays an important role in initiating and maintaining hyperglycemic conditions in diabetes. Its function is as follows. Potent stimulator of glucose-dependent insulin release. Also stimulates insulin release in response to IL6. Plays important roles on gastric motility and the suppression of plasma glucagon levels. May be involved in the suppression of satiety and stimulation of glucose disposal in peripheral tissues, independent of the actions of insulin. Has growth-promoting activities on intestinal epithelium. May also regulate the hypothalamic pituitary axis (HPA) via effects on LH, TSH, CRH, oxytocin, and vasopressin secretion. Increases islet mass through stimulation of islet neogenesis and pancreatic beta cell proliferation. Inhibits beta cell apoptosis. Functionally, stimulates intestinal growth and up-regulates villus height in the small intestine, concomitant with increased crypt cell proliferation and decreased enterocyte apoptosis. The gastrointestinal tract, from the stomach to the colon is the principal target for GLP-2 action. Plays a key role in nutrient homeostasis, enhancing nutrient assimilation through enhanced gastrointestinal function, as well as increasing nutrient disposal. Stimulates intestinal glucose transport and decreases mucosal permeability. Significantly reduces food intake. Inhibits gastric emptying in humans. Suppression of gastric emptying may lead to increased gastric distension, which may contribute to satiety by causing a sensation of fullness. In terms of biological role, may modulate gastric acid secretion and the gastro-pyloro-duodenal activity. May play an important role in intestinal mucosal growth in the early period of life. The sequence is that of Pro-glucagon (GCG) from Cavia porcellus (Guinea pig).